A 97-amino-acid polypeptide reads, in one-letter code: Nucleoid-associated protein Hac_0048 (97 aa).

The protein belongs to the YbaB/EbfC family. In terms of assembly, homodimer.

It localises to the cytoplasm. Its subcellular location is the nucleoid. Binds to DNA and alters its conformation. May be involved in regulation of gene expression, nucleoid organization and DNA protection. The protein is Nucleoid-associated protein Hac_0048 of Helicobacter acinonychis (strain Sheeba).